A 118-amino-acid chain; its full sequence is Pterin-4-alpha-carbinolamine dehydratase (118 aa).

Belongs to the pterin-4-alpha-carbinolamine dehydratase family.

It carries out the reaction (4aS,6R)-4a-hydroxy-L-erythro-5,6,7,8-tetrahydrobiopterin = (6R)-L-erythro-6,7-dihydrobiopterin + H2O. Functionally, involved in tetrahydrobiopterin biosynthesis. Seems to both prevent the formation of 7-pterins and accelerate the formation of quinonoid-BH2. May also have a positive regulatory role in the expression of phhA. In Pseudomonas syringae pv. tomato (strain ATCC BAA-871 / DC3000), this protein is Pterin-4-alpha-carbinolamine dehydratase (phhB).